The chain runs to 202 residues: Dephospho-CoA kinase (202 aa).

The DPCK domain maps to 6 to 202 (KVSITGDLSS…EYFYALKGAL (197 aa)). Residue 14–19 (SSGKTE) coordinates ATP.

The protein belongs to the CoaE family.

The protein resides in the cytoplasm. The enzyme catalyses 3'-dephospho-CoA + ATP = ADP + CoA + H(+). The protein operates within cofactor biosynthesis; coenzyme A biosynthesis; CoA from (R)-pantothenate: step 5/5. In terms of biological role, catalyzes the phosphorylation of the 3'-hydroxyl group of dephosphocoenzyme A to form coenzyme A. The sequence is that of Dephospho-CoA kinase from Chlamydia pneumoniae (Chlamydophila pneumoniae).